Here is a 74-residue protein sequence, read N- to C-terminus: uncharacterized protein (74 aa).

The stretch at 25-62 (QQTIDRLAGLELRMKQLIRAIEVNNELLRTMQEQQNRV) forms a coiled coil.

This is an uncharacterized protein from Bacillus subtilis (strain 168).